A 330-amino-acid chain; its full sequence is Serine/threonine-protein phosphatase beta isoform (330 aa).

Asp63, His65, Asp91, and Asn123 together coordinate Mn(2+). The Proton donor role is filled by His124. Mn(2+)-binding residues include His172 and His247. Over residues 308–319 (GMNSSRPTTPQR) the composition is skewed to polar residues. The interval 308-330 (GMNSSRPTTPQRSAPMLATNKKK) is disordered. 2 positions are modified to phosphothreonine: Thr315 and Thr316.

Belongs to the PPP phosphatase family. PP-1 subfamily. As to quaternary structure, interacts with Nop17l. Interacts with uri; uri inhibits flw phosphatase activity. The cofactor is Mn(2+).

The enzyme catalyses O-phospho-L-seryl-[protein] + H2O = L-seryl-[protein] + phosphate. The catalysed reaction is O-phospho-L-threonyl-[protein] + H2O = L-threonyl-[protein] + phosphate. Its function is as follows. Required for cell adhesion in non-muscle tissues and in maintenance of muscle attachment. Vital for larval development. This chain is Serine/threonine-protein phosphatase beta isoform (flw), found in Drosophila melanogaster (Fruit fly).